We begin with the raw amino-acid sequence, 461 residues long: Pancreatic triacylglycerol lipase (461 aa).

A signal peptide spans 1–12; the sequence is WTLSLLLGAVVG. Cystine bridges form between Cys16–Cys22 and Cys103–Cys114. The active-site Nucleophile is Ser165. Catalysis depends on Asp189, which acts as the Charge relay system. Ca(2+)-binding residues include Glu200, Arg203, Asp205, and Asp208. Cys250 and Cys274 are disulfide-bonded. The active-site Charge relay system is the His276. Disulfide bonds link Cys298–Cys309, Cys312–Cys317, and Cys445–Cys461. In terms of domain architecture, PLAT spans 351–461; the sequence is WRYRVDVTLS…EDVLLTLTAC (111 aa).

This sequence belongs to the AB hydrolase superfamily. Lipase family. Forms a 1:1 stoichiometric complex with (pro)colipase/CLPS.

The protein resides in the secreted. It catalyses the reaction a triacylglycerol + H2O = a diacylglycerol + a fatty acid + H(+). The enzyme catalyses 1,2,3-tributanoylglycerol + H2O = dibutanoylglycerol + butanoate + H(+). It carries out the reaction 1,2,3-tri-(9Z-octadecenoyl)-glycerol + H2O = di-(9Z)-octadecenoylglycerol + (9Z)-octadecenoate + H(+). The catalysed reaction is all-trans-retinyl hexadecanoate + H2O = all-trans-retinol + hexadecanoate + H(+). It catalyses the reaction 1,2-di-(9Z-octadecenoyl)-glycerol + H2O = (9Z-octadecenoyl)-glycerol + (9Z)-octadecenoate + H(+). Its activity is regulated as follows. Inhibited by bile salts, is reactivated by (pro)colipase/CLPS. In terms of biological role, plays an important role in fat metabolism. It preferentially splits the esters of long-chain fatty acids at positions 1 and 3, producing mainly 2-monoacylglycerol and free fatty acids, and shows considerably higher activity against insoluble emulsified substrates than against soluble ones. The sequence is that of Pancreatic triacylglycerol lipase (PNLIP) from Equus caballus (Horse).